Reading from the N-terminus, the 235-residue chain is Small ribosomal subunit protein uS2 (235 aa).

It belongs to the universal ribosomal protein uS2 family.

The sequence is that of Small ribosomal subunit protein uS2 from Geobacillus sp. (strain WCH70).